The sequence spans 59 residues: Large ribosomal subunit protein bL32B (59 aa).

Belongs to the bacterial ribosomal protein bL32 family.

The protein is Large ribosomal subunit protein bL32B (rpmF2) of Enterococcus faecalis (strain ATCC 700802 / V583).